Consider the following 712-residue polypeptide: Dynamin-1-like protein drp-1 (712 aa).

The Dynamin-type G domain maps to 24 to 304 (QIQLPQIVVV…LMHHIRNCLP (281 aa)). The interval 34-41 (GSQSAGKS) is G1 motif. The segment at 60 to 62 (VTR) is G2 motif. Positions 148-151 (DLPG) are G3 motif. Positions 217-220 (TKLD) are G4 motif. Residues 247–250 (VNRS) form a G5 motif region. Residues 280 to 502 (SRNGTPYLAK…LAYINTKHPE (223 aa)) form an interaction with caspase ced-9 region. The tract at residues 523–542 (GRSRNRHASTGERAVSAHGE) is disordered. Residues 620 to 711 (VAIIERLIRN…IISEVRETQV (92 aa)) form the GED domain.

The protein belongs to the TRAFAC class dynamin-like GTPase superfamily. Dynamin/Fzo/YdjA family. As to quaternary structure, interacts (via residues 280-502) with caspase ced-9; the interaction is enhanced by GTP rather than GDP; the interaction is probably direct and may occur at the mitochondrion. As to expression, highly expressed in neurons, in intestinal cells and in the body wall, pharyngeal, and vulval muscles.

Its subcellular location is the mitochondrion. It localises to the mitochondrion outer membrane. The protein localises to the cytoplasm. The protein resides in the cytosol. It carries out the reaction GTP + H2O = GDP + phosphate + H(+). With respect to regulation, GTPase activity is increased by binding to phospholipid membranes. Its function is as follows. Functions in mitochondrial division. Functions in peroxisomal division. Mediates membrane fission, perhaps mainly of the mitochondrial outer membrane. Mitochondrial fission may be promoted by recruitment to mitochondrial membranes via the egl-1/ced-9 complex. Involved in the coordination of mitochondrial division with autophagy in response to acute heat stress during larval development. Plays a role in apoptosis by promoting mitochondrial elimination and cell-death execution, acting downstream of caspase ced-3, and perhaps independently of FIS1-related protein fis-2, caspase ced-9 and apoptosis-inducing factor AIFM/wah-1. Role in promoting apoptosis dependent upon cleavage of drp-1 by ced-3. Involved in negatively modulating longevity in concert with the Insulin/IGF-1-like signaling (IIS) mediated pathway. This Caenorhabditis elegans protein is Dynamin-1-like protein drp-1.